A 70-amino-acid chain; its full sequence is Movement protein TGBp3 (70 aa).

Topologically, residues 1–6 are lumenal; that stretch reads MEANTY. A helical transmembrane segment spans residues 7–27; that stretch reads LNAIILVLVVTIIAVISTSLV. Topologically, residues 28–70 are cytoplasmic; the sequence is RTEPCVIKITGESITVLACKLDAETIRAIADLKPLSVERLSFH.

This sequence belongs to the Tymovirales TGBp3 protein family.

It localises to the host endoplasmic reticulum membrane. Its function is as follows. Plays a role in viral cell-to-cell propagation, by facilitating genome transport to neighboring plant cells through plasmosdesmata. May induce the formation of granular vesicles derived from the Endoplasmic reticulum, which align on actin filaments. In Potato virus X (PVX), this protein is Movement protein TGBp3.